We begin with the raw amino-acid sequence, 167 residues long: Shikimate kinase (167 aa).

Position 12–17 (12–17 (GSGKTT)) interacts with ATP. Threonine 16 contributes to the Mg(2+) binding site. 3 residues coordinate substrate: aspartate 34, arginine 58, and glycine 80. Position 117 (arginine 117) interacts with ATP. Arginine 135 provides a ligand contact to substrate. ATP is bound at residue arginine 152.

The protein belongs to the shikimate kinase family. Monomer. It depends on Mg(2+) as a cofactor.

It localises to the cytoplasm. It catalyses the reaction shikimate + ATP = 3-phosphoshikimate + ADP + H(+). The protein operates within metabolic intermediate biosynthesis; chorismate biosynthesis; chorismate from D-erythrose 4-phosphate and phosphoenolpyruvate: step 5/7. Its function is as follows. Catalyzes the specific phosphorylation of the 3-hydroxyl group of shikimic acid using ATP as a cosubstrate. The polypeptide is Shikimate kinase (Salinispora tropica (strain ATCC BAA-916 / DSM 44818 / JCM 13857 / NBRC 105044 / CNB-440)).